Consider the following 381-residue polypeptide: Phospholipid scramblase family protein C343.06c (381 aa).

The disordered stretch occupies residues 336-369 (QEILKNDQETTPSTNDSSSETKSPFLSDADLDQQ). Residues 344–359 (ETTPSTNDSSSETKSP) are compositionally biased toward polar residues.

This sequence belongs to the phospholipid scramblase family.

The protein localises to the mitochondrion. This Schizosaccharomyces pombe (strain 972 / ATCC 24843) (Fission yeast) protein is Phospholipid scramblase family protein C343.06c.